A 239-amino-acid chain; its full sequence is Uridylate kinase (239 aa).

12 to 15 (KLSG) is a binding site for ATP. Position 53 (Gly53) interacts with UMP. Residues Gly54 and Arg58 each contribute to the ATP site. Residues Asp73 and 135-142 (TGSPCFTT) each bind UMP. ATP contacts are provided by Thr162, Tyr168, and Asp171.

Belongs to the UMP kinase family. In terms of assembly, homohexamer.

The protein resides in the cytoplasm. The enzyme catalyses UMP + ATP = UDP + ADP. It participates in pyrimidine metabolism; CTP biosynthesis via de novo pathway; UDP from UMP (UMPK route): step 1/1. Inhibited by UTP. Functionally, catalyzes the reversible phosphorylation of UMP to UDP. This chain is Uridylate kinase, found in Ruthia magnifica subsp. Calyptogena magnifica.